A 461-amino-acid chain; its full sequence is Armadillo repeat-containing X-linked protein 1 (461 aa).

The Mitochondrial intermembrane segment spans residues 1-6 (MGRTRE). Mitochondrion outer membrane (MOM)-targeting sequence stretches follow at residues 1-6 (MGRTRE) and 26-36 (RLTWGKDENEK). A helical; Signal-anchor membrane pass occupies residues 7 to 29 (AGCVAAGMVIGAGACYCVYRLTW). The Cytoplasmic portion of the chain corresponds to 30 to 461 (GKDENEKLWD…VKVLKVLTKL (432 aa)). Disordered regions lie at residues 34–110 (NEKL…HSEG) and 148–192 (SSLP…PATA). Acidic residues predominate over residues 38 to 51 (WDDEDEEEEEEEES). Basic and acidic residues predominate over residues 96-110 (PDVKKEVYPESHSEG). Residues 167–185 (SRARNRTSGKVKRKNRSKS) are compositionally biased toward basic residues. ARM repeat units follow at residues 203–243 (PYKI…NNAA), 245–284 (SFNQ…NLSV), 366–406 (PAMT…NIND), and 423–461 (SSLF…LTKL).

The protein belongs to the eutherian X-chromosome-specific Armcx family. Interacts with MIRO1.

The protein resides in the mitochondrion. Its subcellular location is the mitochondrion outer membrane. In terms of biological role, regulates mitochondrial transport during axon regeneration. Increases the proportion of motile mitochondria by recruiting stationary mitochondria into the motile pool. Enhances mitochondria movement and neurite growth in both adult axons and embryonic neurons. Promotes neuronal survival and axon regeneration after nerve injury. May link mitochondria to the Trak1-kinesin motor complex via its interaction with MIRO1. In Rattus norvegicus (Rat), this protein is Armadillo repeat-containing X-linked protein 1 (Armcx1).